A 316-amino-acid chain; its full sequence is Ribose-phosphate pyrophosphokinase (316 aa).

Residues 37-39 (DGE) and 96-97 (RQ) contribute to the ATP site. His-130 and Asp-171 together coordinate Mg(2+). The active site involves Lys-194. D-ribose 5-phosphate is bound by residues Arg-196 and Asp-221.

Belongs to the ribose-phosphate pyrophosphokinase family. Class I subfamily. As to quaternary structure, homohexamer. It depends on Mg(2+) as a cofactor.

It is found in the cytoplasm. The catalysed reaction is D-ribose 5-phosphate + ATP = 5-phospho-alpha-D-ribose 1-diphosphate + AMP + H(+). It functions in the pathway metabolic intermediate biosynthesis; 5-phospho-alpha-D-ribose 1-diphosphate biosynthesis; 5-phospho-alpha-D-ribose 1-diphosphate from D-ribose 5-phosphate (route I): step 1/1. In terms of biological role, involved in the biosynthesis of the central metabolite phospho-alpha-D-ribosyl-1-pyrophosphate (PRPP) via the transfer of pyrophosphoryl group from ATP to 1-hydroxyl of ribose-5-phosphate (Rib-5-P). The chain is Ribose-phosphate pyrophosphokinase from Rhodopirellula baltica (strain DSM 10527 / NCIMB 13988 / SH1).